We begin with the raw amino-acid sequence, 204 residues long: Peptide deformylase (204 aa).

The Fe cation site is built by C131 and H174. E175 is an active-site residue. H178 contacts Fe cation.

It belongs to the polypeptide deformylase family. Requires Fe(2+) as cofactor.

The catalysed reaction is N-terminal N-formyl-L-methionyl-[peptide] + H2O = N-terminal L-methionyl-[peptide] + formate. Removes the formyl group from the N-terminal Met of newly synthesized proteins. Requires at least a dipeptide for an efficient rate of reaction. N-terminal L-methionine is a prerequisite for activity but the enzyme has broad specificity at other positions. In Streptococcus pyogenes serotype M18 (strain MGAS8232), this protein is Peptide deformylase.